We begin with the raw amino-acid sequence, 354 residues long: Ribosomal RNA large subunit methyltransferase M (354 aa).

Residues Ser-183, 216–219 (SPGG), Asp-235, Asp-255, and Asp-271 each bind S-adenosyl-L-methionine. Lys-300 (proton acceptor) is an active-site residue.

It belongs to the class I-like SAM-binding methyltransferase superfamily. RNA methyltransferase RlmE family. RlmM subfamily. As to quaternary structure, monomer.

The protein resides in the cytoplasm. The catalysed reaction is cytidine(2498) in 23S rRNA + S-adenosyl-L-methionine = 2'-O-methylcytidine(2498) in 23S rRNA + S-adenosyl-L-homocysteine + H(+). Functionally, catalyzes the 2'-O-methylation at nucleotide C2498 in 23S rRNA. The protein is Ribosomal RNA large subunit methyltransferase M of Pseudomonas putida (strain ATCC 700007 / DSM 6899 / JCM 31910 / BCRC 17059 / LMG 24140 / F1).